We begin with the raw amino-acid sequence, 217 residues long: Probable GTP-binding protein EngB (217 aa).

In terms of domain architecture, EngB-type G spans 29 to 213; the sequence is GPPEVAFAGR…RQAIAETVGI (185 aa). GTP is bound by residues 37 to 44, 64 to 68, 91 to 94, 158 to 161, and 192 to 194; these read GRSNVGKS, GRTQE, DMPG, TKTD, and TSS. Mg(2+) is bound by residues Ser-44 and Thr-66.

It belongs to the TRAFAC class TrmE-Era-EngA-EngB-Septin-like GTPase superfamily. EngB GTPase family. Mg(2+) is required as a cofactor.

Necessary for normal cell division and for the maintenance of normal septation. This is Probable GTP-binding protein EngB from Rhizobium etli (strain ATCC 51251 / DSM 11541 / JCM 21823 / NBRC 15573 / CFN 42).